The chain runs to 1546 residues: DNA-directed RNA polymerase subunit beta' (1546 aa).

Residues cysteine 57, cysteine 59, cysteine 72, and cysteine 75 each contribute to the Zn(2+) site. Mg(2+) is bound by residues aspartate 756, aspartate 758, and aspartate 760. Residues cysteine 1130, cysteine 1211, cysteine 1218, and cysteine 1221 each contribute to the Zn(2+) site. Residues 1512–1546 (LEKYGEGSTSSDAVTGGQRYDDTRPGSSINPGYGD) are disordered. Positions 1536–1546 (PGSSINPGYGD) are enriched in polar residues.

It belongs to the RNA polymerase beta' chain family. In terms of assembly, the RNAP catalytic core consists of 2 alpha, 1 beta, 1 beta' and 1 omega subunit. When a sigma factor is associated with the core the holoenzyme is formed, which can initiate transcription. Mg(2+) serves as cofactor. Requires Zn(2+) as cofactor.

The catalysed reaction is RNA(n) + a ribonucleoside 5'-triphosphate = RNA(n+1) + diphosphate. In terms of biological role, DNA-dependent RNA polymerase catalyzes the transcription of DNA into RNA using the four ribonucleoside triphosphates as substrates. The polypeptide is DNA-directed RNA polymerase subunit beta' (Deinococcus radiodurans (strain ATCC 13939 / DSM 20539 / JCM 16871 / CCUG 27074 / LMG 4051 / NBRC 15346 / NCIMB 9279 / VKM B-1422 / R1)).